Here is a 749-residue protein sequence, read N- to C-terminus: Disintegrin and metalloproteinase domain-containing protein 10 (749 aa).

An N-terminal signal peptide occupies residues 1–18 (MVLPTVLILLLSWAAGLG). A propeptide spanning residues 19-214 (GQYGNPLNKY…MGPELLRKKR (196 aa)) is cleaved from the precursor. Residues 171–178 (GGCADHSV) carry the Cysteine switch motif. Cysteine 173 provides a ligand contact to Zn(2+). Over 215-673 (TTLAERNTCQ…SPQLYENIAE (459 aa)) the chain is Extracellular. Positions 221–457 (NTCQLYIQTD…KRNNCFVESG (237 aa)) constitute a Peptidase M12B domain. Cystine bridges form between cysteine 223-cysteine 314, cysteine 345-cysteine 452, cysteine 400-cysteine 436, cysteine 461-cysteine 496, cysteine 472-cysteine 485, cysteine 474-cysteine 480, cysteine 484-cysteine 516, cysteine 504-cysteine 512, cysteine 511-cysteine 537, cysteine 525-cysteine 544, cysteine 531-cysteine 563, cysteine 556-cysteine 568, cysteine 573-cysteine 599, cysteine 581-cysteine 608, cysteine 583-cysteine 598, cysteine 595-cysteine 640, and cysteine 633-cysteine 646. 2 N-linked (GlcNAc...) asparagine glycosylation sites follow: asparagine 268 and asparagine 279. Histidine 384 is a Zn(2+) binding site. Residue glutamate 385 is part of the active site. 2 residues coordinate Zn(2+): histidine 388 and histidine 394. N-linked (GlcNAc...) asparagine glycosylation is present at asparagine 440. In terms of domain architecture, Disintegrin spans 458 to 552 (QPICGNGMVE…LCPASDPKPN (95 aa)). A glycan (N-linked (GlcNAc...) asparagine) is linked at asparagine 552. The chain crosses the membrane as a helical span at residues 674–697 (WIVAHWWAVLLMGIALIMLMAGFI). The Cytoplasmic segment spans residues 698–749 (KICSVHTPSSNPKLPPPKPLPGTLKRRRPPQPIQQPPRQRPRESYQMGHMRR). Residues 705 to 749 (PSSNPKLPPPKPLPGTLKRRRPPQPIQQPPRQRPRESYQMGHMRR) form a disordered region. The SH3-binding motif lies at 709 to 716 (PKLPPPKP). Threonine 720 carries the post-translational modification Phosphothreonine. The SH3-binding motif lies at 723-729 (RRRPPQP). The segment at 735–749 (RQRPRESYQMGHMRR) is interaction with AP2A1, AP2A2 and AP2M1.

In terms of assembly, forms a ternary EFNA5-EPHA3-ADAM10 complex mediating EFNA5 extracellular domain shedding by ADAM10 which regulates the EFNA5-EPHA3 complex internalization and function, the cleavage occurs in trans, with ADAM10 and its substrate being on the membranes of opposing cells. Interacts with the clathrin adapter AP2 complex subunits AP2A1, AP2A2, AP2B1, and AP2M1; this interaction facilitates ADAM10 endocytosis from the plasma membrane during long-term potentiation in hippocampal neurons. Forms a ternary complex composed of ADAM10, EPHA4 and CADH1; within the complex, ADAM10 cleaves CADH1 which disrupts adherens junctions. Interacts with EPHA2. Interacts with NGF in a divalent cation-dependent manner. Interacts with TSPAN14; the interaction promotes ADAM10 maturation and cell surface expression. Interacts with TSPAN5, TSPAN10, TSPAN14, TSPAN15, TSPAN17 and TSPAN33; these interactions regulate ADAM10 substrate specificity, endocytosis and turnover. Interacts (via extracellular domain) with TSPAN33 (via extracellular domain) and (via cytoplasmic domain) with AFDN; interaction with TSPAN33 allows the docking of ADAM10 to zonula adherens through a PDZ11-dependent interaction between TSPAN33 and PLEKHA7 while interaction with AFDN locks ADAM10 at zonula adherens. Interacts with DLG1; this interaction recruits ADAM10 to the cell membrane during long-term depression in hippocampal neurons. Interacts (via extracellular domain) with BACE1 (via extracellular domain). Interacts with FAM171A1. The cofactor is Zn(2+). In terms of processing, the precursor is cleaved by furin and PCSK7. In terms of tissue distribution, expressed in brain, kidney, lung, spleen, ovary and testis.

The protein resides in the cell membrane. The protein localises to the golgi apparatus membrane. Its subcellular location is the cytoplasmic vesicle. It localises to the clathrin-coated vesicle. It is found in the cell projection. The protein resides in the axon. The protein localises to the dendrite. Its subcellular location is the cell junction. It localises to the adherens junction. It is found in the cytoplasm. It carries out the reaction Endopeptidase of broad specificity.. Its activity is regulated as follows. Catalytically inactive when the propeptide is intact and associated with the mature enzyme. The disintegrin and cysteine-rich regions modulate access of substrates to exerts an inhibitory effect on the cleavage of ADAM10 substrates. Transmembrane metalloprotease which mediates the ectodomain shedding of a myriad of transmembrane proteins, including adhesion proteins, growth factor precursors and cytokines being essential for development and tissue homeostasis. Associates with six members of the tetraspanin superfamily TspanC8 which regulate its exit from the endoplasmic reticulum and its substrate selectivity. Cleaves the membrane-bound precursor of TNF-alpha at '76-Ala-|-Val-77' to its mature soluble form. Responsible for the proteolytical release of soluble JAM3 from endothelial cells surface. Responsible for the proteolytic release of several other cell-surface proteins, including heparin-binding epidermal growth-like factor, ephrin-A2, CD44, CDH2 and for constitutive and regulated alpha-secretase cleavage of amyloid precursor protein (APP). Contributes to the normal cleavage of the cellular prion protein. Involved in the cleavage of the adhesion molecule L1 at the cell surface and in released membrane vesicles, suggesting a vesicle-based protease activity. Also controls the proteolytic processing of Notch and mediates lateral inhibition during neurogenesis. Required for the development of type 1 transitional B cells into marginal zone B cells, probably by cleaving Notch. Responsible for the FasL ectodomain shedding and for the generation of the remnant ADAM10-processed FasL (FasL APL) transmembrane form. Also cleaves the ectodomain of the integral membrane proteins CORIN and ITM2B. Mediates the proteolytic cleavage of LAG3, leading to release the secreted form of LAG3. Mediates the proteolytic cleavage of IL6R and IL11RA, leading to the release of secreted forms of IL6R and IL11RA. Enhances the cleavage of CHL1 by BACE1. Cleaves NRCAM. Cleaves TREM2, resulting in shedding of the TREM2 ectodomain. Involved in the development and maturation of glomerular and coronary vasculature. During development of the cochlear organ of Corti, promotes pillar cell separation by forming a ternary complex with CADH1 and EPHA4 and cleaving CADH1 at adherens junctions. May regulate the EFNA5-EPHA3 signaling. Regulates leukocyte transmigration as a sheddase for the adherens junction protein VE-cadherin/CDH5 in endothelial cells. The polypeptide is Disintegrin and metalloproteinase domain-containing protein 10 (Adam10) (Rattus norvegicus (Rat)).